The following is a 550-amino-acid chain: Probable acyl-activating enzyme 6 (550 aa).

Belongs to the ATP-dependent AMP-binding enzyme family. Expressed at low levels in roots, leaves, stems and developing seeds.

May act as an acid--thiol ligase that activates carboxylic acids by forming acyl-CoAs. The polypeptide is Probable acyl-activating enzyme 6 (AAE6) (Arabidopsis thaliana (Mouse-ear cress)).